We begin with the raw amino-acid sequence, 387 residues long: 3-ketoacyl-CoA thiolase (387 aa).

Residue C91 is the Acyl-thioester intermediate of the active site. Active-site proton acceptor residues include H343 and C373.

This sequence belongs to the thiolase-like superfamily. Thiolase family. As to quaternary structure, heterotetramer of two alpha chains (FadB) and two beta chains (FadA).

The protein resides in the cytoplasm. It carries out the reaction an acyl-CoA + acetyl-CoA = a 3-oxoacyl-CoA + CoA. It participates in lipid metabolism; fatty acid beta-oxidation. Functionally, catalyzes the final step of fatty acid oxidation in which acetyl-CoA is released and the CoA ester of a fatty acid two carbons shorter is formed. The protein is 3-ketoacyl-CoA thiolase of Shigella sonnei (strain Ss046).